We begin with the raw amino-acid sequence, 432 residues long: Glutamyl-tRNA reductase (432 aa).

Substrate contacts are provided by residues Thr55–Arg58, Ser114, Glu119–Gln121, and Gln125. Catalysis depends on Cys56, which acts as the Nucleophile. Gly194 to Ile199 provides a ligand contact to NADP(+).

Belongs to the glutamyl-tRNA reductase family. Homodimer.

The enzyme catalyses (S)-4-amino-5-oxopentanoate + tRNA(Glu) + NADP(+) = L-glutamyl-tRNA(Glu) + NADPH + H(+). It participates in porphyrin-containing compound metabolism; protoporphyrin-IX biosynthesis; 5-aminolevulinate from L-glutamyl-tRNA(Glu): step 1/2. Its function is as follows. Catalyzes the NADPH-dependent reduction of glutamyl-tRNA(Glu) to glutamate 1-semialdehyde (GSA). This Burkholderia orbicola (strain AU 1054) protein is Glutamyl-tRNA reductase.